Consider the following 596-residue polypeptide: Leucine-rich repeat and IQ domain-containing protein 4 (596 aa).

LRR repeat units lie at residues 22-44 (LPRL…LLRQ), 59-83 (LTDR…ILAL), 84-106 (KELE…IQQL), 108-129 (NTKV…LGAL), 130-152 (SSLE…VVSR), 153-176 (LRTL…ICKS), 177-200 (LHHL…IVNQ), 202-223 (KLRE…LCVL), 224-246 (YNLE…IGHL), 248-269 (RLQK…LSQC), 270-293 (SKLS…ELLT), 295-315 (LTEV…LCSW), 317-337 (SLHL…SFKR), 338-361 (LINL…ICAL), 362-384 (KNLE…ISLL), 385-407 (SNLK…IFSL), 410-433 (LEKL…IKRL), 434-457 (MNLK…GLMP), 459-479 (LEVL…ICRT), 480-502 (RNLR…LDHL), 504-525 (NLKV…VCNQ), and 527-549 (NEAI…TIQA). The region spanning 540–569 (RKMMATTIQAWWRGIMVRKGYGSYEELLKA) is the IQ domain. Residues 569-587 (ARKKGKSPPKDKKGKKAAK) show a composition bias toward basic residues. Residues 569-596 (ARKKGKSPPKDKKGKKAAKGKPEKGNKK) form a disordered region.

This chain is Leucine-rich repeat and IQ domain-containing protein 4 (Lrriq4), found in Mus musculus (Mouse).